We begin with the raw amino-acid sequence, 345 residues long: Protein RecA (345 aa).

63–70 (GPESSGKT) is an ATP binding site. The disordered stretch occupies residues 326–345 (VLSDALMTDPEPDADGTPED). Residues 335-345 (PEPDADGTPED) are compositionally biased toward acidic residues.

Belongs to the RecA family.

The protein resides in the cytoplasm. In terms of biological role, can catalyze the hydrolysis of ATP in the presence of single-stranded DNA, the ATP-dependent uptake of single-stranded DNA by duplex DNA, and the ATP-dependent hybridization of homologous single-stranded DNAs. It interacts with LexA causing its activation and leading to its autocatalytic cleavage. This Gluconobacter oxydans (strain 621H) (Gluconobacter suboxydans) protein is Protein RecA.